The sequence spans 110 residues: Hydrogenase maturation factor HypA (110 aa).

His-2 provides a ligand contact to Ni(2+). Zn(2+) contacts are provided by Cys-70, Cys-73, Cys-86, and Cys-89.

Belongs to the HypA/HybF family.

Functionally, involved in the maturation of [NiFe] hydrogenases. Required for nickel insertion into the metal center of the hydrogenase. This chain is Hydrogenase maturation factor HypA, found in Geotalea uraniireducens (strain Rf4) (Geobacter uraniireducens).